Reading from the N-terminus, the 1064-residue chain is Lysine-specific demethylase 4A (1064 aa).

N-acetylalanine is present on A2. One can recognise a JmjN domain in the interval I14 to R56. Position 132 (Y132) interacts with 2-oxoglutarate. In terms of domain architecture, JmjC spans E142–C308. Fe cation contacts are provided by H188 and E190. Residues N198 and K206 each coordinate 2-oxoglutarate. Positions 234 and 240 each coordinate Zn(2+). K241 contacts 2-oxoglutarate. Fe cation is bound at residue H276. Residues C306 and C308 each contribute to the Zn(2+) site. Disordered regions lie at residues L354–D384, L434–S489, S502–E537, R549–E573, and N590–L643. Over residues E368–E382 the composition is skewed to acidic residues. Basic and acidic residues predominate over residues T460 to L472. Residues E473–E482 show a composition bias toward acidic residues. The segment covering S509–S525 has biased composition (low complexity). Residue S523 is modified to Phosphoserine. Polar residues predominate over residues A528–E537. Over residues T593–P608 the composition is skewed to basic residues. The interval R597–K638 is interaction with NCOR1. Over residues G615 to E634 the composition is skewed to acidic residues. A PHD-type 1 zinc finger spans residues M709–S767. The C2HC pre-PHD-type zinc finger occupies E772–A805. The PHD-type 2 zinc-finger motif lies at L828 to K885. 2 Tudor domains span residues L897–L954 and G955–P1011.

The protein belongs to the JHDM3 histone demethylase family. In terms of assembly, interacts with histone deacetylase proteins HDAC1, HDAC2 and HDAC3. Interacts with RB and NCOR1. Interacts with VRK1. Requires Fe(2+) as cofactor. Post-translationally, ubiquitinated by RNF8 and RNF168, leading to its degradation. Degradation promotes accessibility of H4K20me2 mark for DNA repair protein TP53BP1, which is then recruited. Also ubiquitinated by the SCF(FBXO22) complex; leading to proteasomal degradation. As to expression, widely expressed.

It is found in the nucleus. It carries out the reaction N(6),N(6),N(6)-trimethyl-L-lysyl(9)-[histone H3] + 2 2-oxoglutarate + 2 O2 = N(6)-methyl-L-lysyl(9)-[histone H3] + 2 formaldehyde + 2 succinate + 2 CO2. It catalyses the reaction N(6),N(6),N(6)-trimethyl-L-lysyl(36)-[histone H3] + 2 2-oxoglutarate + 2 O2 = N(6)-methyl-L-lysyl(36)-[histone H3] + 2 formaldehyde + 2 succinate + 2 CO2. Histone demethylase that specifically demethylates 'Lys-9' and 'Lys-36' residues of histone H3, thereby playing a central role in histone code. Does not demethylate histone H3 'Lys-4', H3 'Lys-27' nor H4 'Lys-20'. Demethylates trimethylated H3 'Lys-9' and H3 'Lys-36' residue, while it has no activity on mono- and dimethylated residues. Demethylation of Lys residue generates formaldehyde and succinate. Participates in transcriptional repression of ASCL2 and E2F-responsive promoters via the recruitment of histone deacetylases and NCOR1, respectively. The polypeptide is Lysine-specific demethylase 4A (Kdm4a) (Mus musculus (Mouse)).